An 81-amino-acid polypeptide reads, in one-letter code: RNA-binding protein Hfq (81 aa).

A Sm domain is found at 11-71 (DIFLNSARKN…VSTITPLRPI (61 aa)).

The protein belongs to the Hfq family. In terms of assembly, homohexamer.

RNA chaperone that binds small regulatory RNA (sRNAs) and mRNAs to facilitate mRNA translational regulation in response to envelope stress, environmental stress and changes in metabolite concentrations. Also binds with high specificity to tRNAs. The chain is RNA-binding protein Hfq from Clostridium acetobutylicum (strain ATCC 824 / DSM 792 / JCM 1419 / IAM 19013 / LMG 5710 / NBRC 13948 / NRRL B-527 / VKM B-1787 / 2291 / W).